The chain runs to 489 residues: Lysine--tRNA ligase (489 aa).

The Mg(2+) site is built by Glu398 and Glu405.

The protein belongs to the class-II aminoacyl-tRNA synthetase family. Homodimer. Requires Mg(2+) as cofactor.

The protein localises to the cytoplasm. The catalysed reaction is tRNA(Lys) + L-lysine + ATP = L-lysyl-tRNA(Lys) + AMP + diphosphate. This is Lysine--tRNA ligase from Moorella thermoacetica (strain ATCC 39073 / JCM 9320).